Here is a 509-residue protein sequence, read N- to C-terminus: Maturase K (509 aa).

The protein belongs to the intron maturase 2 family. MatK subfamily.

The protein resides in the plastid. The protein localises to the chloroplast. Its function is as follows. Usually encoded in the trnK tRNA gene intron. Probably assists in splicing its own and other chloroplast group II introns. This chain is Maturase K, found in Chamaecyparis obtusa (Hinoki false-cypress).